The chain runs to 585 residues: Arginine--tRNA ligase (585 aa).

Positions 126–136 (PNIAKEMHVGH) match the 'HIGH' region motif.

Belongs to the class-I aminoacyl-tRNA synthetase family. Monomer.

It localises to the cytoplasm. It carries out the reaction tRNA(Arg) + L-arginine + ATP = L-arginyl-tRNA(Arg) + AMP + diphosphate. The chain is Arginine--tRNA ligase from Trichodesmium erythraeum (strain IMS101).